Here is a 543-residue protein sequence, read N- to C-terminus: RuBisCO large subunit-binding protein subunit alpha, chloroplastic (543 aa).

The transit peptide at 1–2 (GA) directs the protein to the chloroplast.

This sequence belongs to the chaperonin (HSP60) family. In terms of assembly, oligomer of probably six alpha and six beta subunits.

It is found in the plastid. The protein localises to the chloroplast. Functionally, this protein binds RuBisCO small and large subunits and is implicated in the assembly of the enzyme oligomer. The chain is RuBisCO large subunit-binding protein subunit alpha, chloroplastic from Triticum aestivum (Wheat).